The following is a 347-amino-acid chain: Dihydroorotase (347 aa).

H14 and H16 together coordinate Zn(2+). Substrate is bound by residues 16-18 (HLR) and N42. Residues K100, H137, and H175 each coordinate Zn(2+). K100 is modified (N6-carboxylysine). H137 lines the substrate pocket. L220 contacts substrate. Residue D248 coordinates Zn(2+). Residue D248 is part of the active site. Substrate contacts are provided by H252 and A264.

Belongs to the metallo-dependent hydrolases superfamily. DHOase family. Class II DHOase subfamily. In terms of assembly, homodimer. Requires Zn(2+) as cofactor.

The enzyme catalyses (S)-dihydroorotate + H2O = N-carbamoyl-L-aspartate + H(+). It functions in the pathway pyrimidine metabolism; UMP biosynthesis via de novo pathway; (S)-dihydroorotate from bicarbonate: step 3/3. Functionally, catalyzes the reversible cyclization of carbamoyl aspartate to dihydroorotate. The chain is Dihydroorotase from Pseudomonas syringae pv. tomato (strain ATCC BAA-871 / DC3000).